Here is a 227-residue protein sequence, read N- to C-terminus: Cytochrome c oxidase subunit 2 (227 aa).

Residues 1 to 14 (MAYPYELGFQDASS) are Mitochondrial intermembrane-facing. The helical transmembrane segment at 15–45 (PIMEELLHFHDHTLMIVFLISTLVLYLITIM) threads the bilayer. Topologically, residues 46–59 (LTTKLTHTSTMDAQ) are mitochondrial matrix. Residues 60–87 (EIETIWTILPAIILILIALPSLRILYMM) form a helical membrane-spanning segment. Topologically, residues 88–227 (DEINSPSLTV…DFEIWSSSML (140 aa)) are mitochondrial intermembrane. Positions 161, 196, 198, 200, 204, and 207 each coordinate Cu cation. A Mg(2+)-binding site is contributed by E198.

The protein belongs to the cytochrome c oxidase subunit 2 family. In terms of assembly, component of the cytochrome c oxidase (complex IV, CIV), a multisubunit enzyme composed of 14 subunits. The complex is composed of a catalytic core of 3 subunits MT-CO1, MT-CO2 and MT-CO3, encoded in the mitochondrial DNA, and 11 supernumerary subunits COX4I, COX5A, COX5B, COX6A, COX6B, COX6C, COX7A, COX7B, COX7C, COX8 and NDUFA4, which are encoded in the nuclear genome. The complex exists as a monomer or a dimer and forms supercomplexes (SCs) in the inner mitochondrial membrane with NADH-ubiquinone oxidoreductase (complex I, CI) and ubiquinol-cytochrome c oxidoreductase (cytochrome b-c1 complex, complex III, CIII), resulting in different assemblies (supercomplex SCI(1)III(2)IV(1) and megacomplex MCI(2)III(2)IV(2)). Found in a complex with TMEM177, COA6, COX18, COX20, SCO1 and SCO2. Interacts with TMEM177 in a COX20-dependent manner. Interacts with COX20. Interacts with COX16. Cu cation is required as a cofactor.

The protein resides in the mitochondrion inner membrane. It carries out the reaction 4 Fe(II)-[cytochrome c] + O2 + 8 H(+)(in) = 4 Fe(III)-[cytochrome c] + 2 H2O + 4 H(+)(out). Component of the cytochrome c oxidase, the last enzyme in the mitochondrial electron transport chain which drives oxidative phosphorylation. The respiratory chain contains 3 multisubunit complexes succinate dehydrogenase (complex II, CII), ubiquinol-cytochrome c oxidoreductase (cytochrome b-c1 complex, complex III, CIII) and cytochrome c oxidase (complex IV, CIV), that cooperate to transfer electrons derived from NADH and succinate to molecular oxygen, creating an electrochemical gradient over the inner membrane that drives transmembrane transport and the ATP synthase. Cytochrome c oxidase is the component of the respiratory chain that catalyzes the reduction of oxygen to water. Electrons originating from reduced cytochrome c in the intermembrane space (IMS) are transferred via the dinuclear copper A center (CU(A)) of subunit 2 and heme A of subunit 1 to the active site in subunit 1, a binuclear center (BNC) formed by heme A3 and copper B (CU(B)). The BNC reduces molecular oxygen to 2 water molecules using 4 electrons from cytochrome c in the IMS and 4 protons from the mitochondrial matrix. The chain is Cytochrome c oxidase subunit 2 (MT-CO2) from Cavia aperea (Brazilian guinea pig).